The chain runs to 427 residues: Trigger factor (427 aa).

The PPIase FKBP-type domain maps to 163–248 (GDTVVIDFVG…VNEVKAKELP (86 aa)).

It belongs to the FKBP-type PPIase family. Tig subfamily.

It is found in the cytoplasm. The enzyme catalyses [protein]-peptidylproline (omega=180) = [protein]-peptidylproline (omega=0). In terms of biological role, involved in protein export. Acts as a chaperone by maintaining the newly synthesized protein in an open conformation. Functions as a peptidyl-prolyl cis-trans isomerase. The sequence is that of Trigger factor from Lactococcus lactis subsp. cremoris (strain SK11).